Reading from the N-terminus, the 236-residue chain is Ribose-5-phosphate isomerase A (236 aa).

Residues 33–36 (TGST), 90–93 (DGAD), and 103–106 (KGGG) each bind substrate. E112 serves as the catalytic Proton acceptor. Residue K130 coordinates substrate.

This sequence belongs to the ribose 5-phosphate isomerase family. As to quaternary structure, homodimer.

It carries out the reaction aldehydo-D-ribose 5-phosphate = D-ribulose 5-phosphate. Its pathway is carbohydrate degradation; pentose phosphate pathway; D-ribose 5-phosphate from D-ribulose 5-phosphate (non-oxidative stage): step 1/1. Catalyzes the reversible conversion of ribose-5-phosphate to ribulose 5-phosphate. The chain is Ribose-5-phosphate isomerase A from Trichormus variabilis (strain ATCC 29413 / PCC 7937) (Anabaena variabilis).